We begin with the raw amino-acid sequence, 104 residues long: Small ribosomal subunit protein uS10 (104 aa).

This sequence belongs to the universal ribosomal protein uS10 family. In terms of assembly, part of the 30S ribosomal subunit.

In terms of biological role, involved in the binding of tRNA to the ribosomes. The chain is Small ribosomal subunit protein uS10 from Nitrosococcus oceani (strain ATCC 19707 / BCRC 17464 / JCM 30415 / NCIMB 11848 / C-107).